Consider the following 493-residue polypeptide: Cysteine--tRNA ligase (493 aa).

Cys-29 contacts Zn(2+). The 'HIGH' region signature appears at 31-41 (VTVYDLSHIGH). Zn(2+) is bound by residues Cys-209, His-234, and Glu-238. The 'KMSKS' region signature appears at 266 to 270 (KMSKS). An ATP-binding site is contributed by Lys-269.

The protein belongs to the class-I aminoacyl-tRNA synthetase family. Monomer. Requires Zn(2+) as cofactor.

Its subcellular location is the cytoplasm. It catalyses the reaction tRNA(Cys) + L-cysteine + ATP = L-cysteinyl-tRNA(Cys) + AMP + diphosphate. This is Cysteine--tRNA ligase from Syntrophobacter fumaroxidans (strain DSM 10017 / MPOB).